A 509-amino-acid polypeptide reads, in one-letter code: Maturase K (509 aa).

Belongs to the intron maturase 2 family. MatK subfamily.

It is found in the plastid. The protein resides in the chloroplast. Its function is as follows. Usually encoded in the trnK tRNA gene intron. Probably assists in splicing its own and other chloroplast group II introns. The polypeptide is Maturase K (Anthocercis viscosa (Sticky tailflower)).